The primary structure comprises 292 residues: Homoserine kinase (292 aa).

ATP is bound at residue 84 to 94 (PLSRGLGSSSA).

This sequence belongs to the GHMP kinase family. Homoserine kinase subfamily.

Its subcellular location is the cytoplasm. It catalyses the reaction L-homoserine + ATP = O-phospho-L-homoserine + ADP + H(+). The protein operates within amino-acid biosynthesis; L-threonine biosynthesis; L-threonine from L-aspartate: step 4/5. Functionally, catalyzes the ATP-dependent phosphorylation of L-homoserine to L-homoserine phosphate. This Campylobacter jejuni subsp. jejuni serotype O:23/36 (strain 81-176) protein is Homoserine kinase.